Here is a 436-residue protein sequence, read N- to C-terminus: Gamma-glutamyl phosphate reductase (436 aa).

It belongs to the gamma-glutamyl phosphate reductase family.

It localises to the cytoplasm. It carries out the reaction L-glutamate 5-semialdehyde + phosphate + NADP(+) = L-glutamyl 5-phosphate + NADPH + H(+). It participates in amino-acid biosynthesis; L-proline biosynthesis; L-glutamate 5-semialdehyde from L-glutamate: step 2/2. Its function is as follows. Catalyzes the NADPH-dependent reduction of L-glutamate 5-phosphate into L-glutamate 5-semialdehyde and phosphate. The product spontaneously undergoes cyclization to form 1-pyrroline-5-carboxylate. This is Gamma-glutamyl phosphate reductase from Prochlorococcus marinus (strain MIT 9215).